We begin with the raw amino-acid sequence, 331 residues long: MTQQDPSTKEPKFIKNGIYRKDSVPVREKKPEWLKVTIPTGQVFTEVRKIVKEHRLHTVCEEAMCPNIGECWSRGTATFMLMGHICTRACRFCAVDTGNPMGKLDLDEPRSVADSVRLMDLKYVVLTSVDRDDLPDGGAYHFAKTVKAIKEVNPQTRVEALTPDFGGNTACVDLVLDSGVDTYAQNLETVRRLTHPVRDIRASYDRTLSVLAHAKQARPDVITKTSLMLGLGETREEIREAMADCRAAGVDVLTFGQYLRPTMHHLPVERYISPAEFDEIREEGMQLGFLEVVSGPLVRSSYKAEQIVMDRPGNLPEHLSHLDGGSELTLI.

Cys60, Cys65, Cys71, Cys86, Cys90, Cys93, and Ser301 together coordinate [4Fe-4S] cluster. The Radical SAM core domain occupies 72-290 (WSRGTATFML…REEGMQLGFL (219 aa)).

The protein belongs to the radical SAM superfamily. Lipoyl synthase family. Requires [4Fe-4S] cluster as cofactor.

It localises to the cytoplasm. It carries out the reaction [[Fe-S] cluster scaffold protein carrying a second [4Fe-4S](2+) cluster] + N(6)-octanoyl-L-lysyl-[protein] + 2 oxidized [2Fe-2S]-[ferredoxin] + 2 S-adenosyl-L-methionine + 4 H(+) = [[Fe-S] cluster scaffold protein] + N(6)-[(R)-dihydrolipoyl]-L-lysyl-[protein] + 4 Fe(3+) + 2 hydrogen sulfide + 2 5'-deoxyadenosine + 2 L-methionine + 2 reduced [2Fe-2S]-[ferredoxin]. It participates in protein modification; protein lipoylation via endogenous pathway; protein N(6)-(lipoyl)lysine from octanoyl-[acyl-carrier-protein]: step 2/2. Catalyzes the radical-mediated insertion of two sulfur atoms into the C-6 and C-8 positions of the octanoyl moiety bound to the lipoyl domains of lipoate-dependent enzymes, thereby converting the octanoylated domains into lipoylated derivatives. The polypeptide is Lipoyl synthase (Deinococcus radiodurans (strain ATCC 13939 / DSM 20539 / JCM 16871 / CCUG 27074 / LMG 4051 / NBRC 15346 / NCIMB 9279 / VKM B-1422 / R1)).